Here is an 87-residue protein sequence, read N- to C-terminus: uncharacterized protein (87 aa).

Residues 1–22 (MKIKTTVAALSVLSVLSFGAFA) form the signal peptide.

It belongs to the BhsA/McbA family.

The protein resides in the periplasm. This is an uncharacterized protein from Escherichia coli O6:H1 (strain CFT073 / ATCC 700928 / UPEC).